Here is a 268-residue protein sequence, read N- to C-terminus: UPF0294 protein ETA_26410 (268 aa).

Belongs to the UPF0294 family.

Its subcellular location is the cytoplasm. The polypeptide is UPF0294 protein ETA_26410 (Erwinia tasmaniensis (strain DSM 17950 / CFBP 7177 / CIP 109463 / NCPPB 4357 / Et1/99)).